The primary structure comprises 251 residues: Hydroxyacylglutathione hydrolase (251 aa).

Zn(2+) is bound by residues His53, His55, Asp57, His58, His110, Asp127, and His165.

This sequence belongs to the metallo-beta-lactamase superfamily. Glyoxalase II family. As to quaternary structure, monomer. The cofactor is Zn(2+).

The catalysed reaction is an S-(2-hydroxyacyl)glutathione + H2O = a 2-hydroxy carboxylate + glutathione + H(+). Its pathway is secondary metabolite metabolism; methylglyoxal degradation; (R)-lactate from methylglyoxal: step 2/2. Thiolesterase that catalyzes the hydrolysis of S-D-lactoyl-glutathione to form glutathione and D-lactic acid. The chain is Hydroxyacylglutathione hydrolase from Salmonella gallinarum (strain 287/91 / NCTC 13346).